Consider the following 326-residue polypeptide: Cyclin-dependent kinase 6 (326 aa).

Met-1 bears the N-acetylmethionine mark. Phosphotyrosine occurs at positions 13 and 24. Residues 13–300 (YECVAEIGEG…AYSALSHPYF (288 aa)) form the Protein kinase domain. ATP contacts are provided by residues 19–27 (IGEGAYGKV) and Lys-43. Phosphothreonine occurs at positions 49 and 70. The active-site Proton acceptor is the Asp-145. Thr-177 bears the Phosphothreonine mark. Lys-264 is modified (N6-acetyllysine). Thr-325 is modified (phosphothreonine).

It belongs to the protein kinase superfamily. CMGC Ser/Thr protein kinase family. CDC2/CDKX subfamily. Interaction with D-type G1 cyclins. Cyclin binding promotes enzyme activation by phosphorylation at Thr-177. Binds to RUNX1, CDKN2D, FBXO7 and CDKN2C/p18-INK4c. Forms a cytoplasmic complex with Hsp90/HSP90AB1 and CDC37. FBXO7-binding promotes D-type cyclin binding. Interacts with Kaposi's sarcoma herpesvirus (KSHV) V-cyclin and herpesvirus saimiri (V-cyclin/ECLF2); the CDK6/V-cyclin complex phosphorylates NPM1 and thus lead to viral reactivation by reducing viral LANA levels. Thr-177 phosphorylation and Tyr-24 dephosphorylation promotes kinase activity. In terms of tissue distribution, expressed ubiquitously. Accumulates in squamous cell carcinomas, proliferating hematopoietic progenitor cells, beta-cells of pancreatic islets of Langerhans, and neuroblastomas. Reduced levels in differentiating cells.

The protein localises to the cytoplasm. The protein resides in the nucleus. It localises to the cell projection. It is found in the ruffle. Its subcellular location is the cytoskeleton. The protein localises to the microtubule organizing center. The protein resides in the centrosome. The catalysed reaction is L-seryl-[protein] + ATP = O-phospho-L-seryl-[protein] + ADP + H(+). It catalyses the reaction L-threonyl-[protein] + ATP = O-phospho-L-threonyl-[protein] + ADP + H(+). Its activity is regulated as follows. Inhibited by INK4 proteins (CDKN2C/p18-INK4c), aminopurvalanol, PD0332991, 4-(Pyrazol-4-yl)-pyrimidines and fisetin, a flavonol inhibitor. Activated by Thr-177 phosphorylation and Tyr-24 dephosphorylation. Stimulated by cyclin from herpesvirus saimiri (V-cyclin/ECLF2). Rapidly down-regulated prior to cell differentiation (e.g. erythroid and osteoblast). Its function is as follows. Serine/threonine-protein kinase involved in the control of the cell cycle and differentiation; promotes G1/S transition. Phosphorylates pRB/RB1 and NPM1. Interacts with D-type G1 cyclins during interphase at G1 to form a pRB/RB1 kinase and controls the entrance into the cell cycle. Involved in initiation and maintenance of cell cycle exit during cell differentiation; prevents cell proliferation and negatively regulates cell differentiation, but is required for the proliferation of specific cell types (e.g. erythroid and hematopoietic cells). Essential for cell proliferation within the dentate gyrus of the hippocampus and the subventricular zone of the lateral ventricles. Required during thymocyte development. Promotes the production of newborn neurons, probably by modulating G1 length. Promotes, at least in astrocytes, changes in patterns of gene expression, changes in the actin cytoskeleton including loss of stress fibers, and enhanced motility during cell differentiation. Prevents myeloid differentiation by interfering with RUNX1 and reducing its transcription transactivation activity, but promotes proliferation of normal myeloid progenitors. Delays senescence. Promotes the proliferation of beta-cells in pancreatic islets of Langerhans. May play a role in the centrosome organization during the cell cycle phases. The protein is Cyclin-dependent kinase 6 (CDK6) of Homo sapiens (Human).